The primary structure comprises 337 residues: Ketol-acid reductoisomerase (NADP(+)) (337 aa).

Positions 3-183 constitute a KARI N-terminal Rossmann domain; it reads VEMFYDADAD…GGARAGVIKT (181 aa). NADP(+) is bound by residues 26 to 29, Lys49, Ser52, Ser54, and 84 to 87; these read YGSQ and DTAQ. His109 is an active-site residue. Gly135 is a binding site for NADP(+). The KARI C-terminal knotted domain occupies 184 to 329; the sequence is TFKDETETDL…KKLRDLMSWV (146 aa). Residues Asp192, Glu196, Glu228, and Glu232 each coordinate Mg(2+). Residue Ser253 participates in substrate binding.

Belongs to the ketol-acid reductoisomerase family. Mg(2+) is required as a cofactor.

It catalyses the reaction (2R)-2,3-dihydroxy-3-methylbutanoate + NADP(+) = (2S)-2-acetolactate + NADPH + H(+). The catalysed reaction is (2R,3R)-2,3-dihydroxy-3-methylpentanoate + NADP(+) = (S)-2-ethyl-2-hydroxy-3-oxobutanoate + NADPH + H(+). It participates in amino-acid biosynthesis; L-isoleucine biosynthesis; L-isoleucine from 2-oxobutanoate: step 2/4. It functions in the pathway amino-acid biosynthesis; L-valine biosynthesis; L-valine from pyruvate: step 2/4. Its function is as follows. Involved in the biosynthesis of branched-chain amino acids (BCAA). Catalyzes an alkyl-migration followed by a ketol-acid reduction of (S)-2-acetolactate (S2AL) to yield (R)-2,3-dihydroxy-isovalerate. In the isomerase reaction, S2AL is rearranged via a Mg-dependent methyl migration to produce 3-hydroxy-3-methyl-2-ketobutyrate (HMKB). In the reductase reaction, this 2-ketoacid undergoes a metal-dependent reduction by NADPH to yield (R)-2,3-dihydroxy-isovalerate. This is Ketol-acid reductoisomerase (NADP(+)) from Mycolicibacterium gilvum (strain PYR-GCK) (Mycobacterium gilvum (strain PYR-GCK)).